We begin with the raw amino-acid sequence, 501 residues long: ATP synthase subunit alpha (501 aa).

169 to 176 (GDRQTGKT) contacts ATP.

Belongs to the ATPase alpha/beta chains family. As to quaternary structure, F-type ATPases have 2 components, CF(1) - the catalytic core - and CF(0) - the membrane proton channel. CF(1) has five subunits: alpha(3), beta(3), gamma(1), delta(1), epsilon(1). CF(0) has three main subunits: a(1), b(2) and c(9-12). The alpha and beta chains form an alternating ring which encloses part of the gamma chain. CF(1) is attached to CF(0) by a central stalk formed by the gamma and epsilon chains, while a peripheral stalk is formed by the delta and b chains.

It localises to the cell membrane. The catalysed reaction is ATP + H2O + 4 H(+)(in) = ADP + phosphate + 5 H(+)(out). In terms of biological role, produces ATP from ADP in the presence of a proton gradient across the membrane. The alpha chain is a regulatory subunit. The polypeptide is ATP synthase subunit alpha (Streptococcus thermophilus (strain CNRZ 1066)).